The primary structure comprises 495 residues: Aspartyl/glutamyl-tRNA(Asn/Gln) amidotransferase subunit B (495 aa).

Belongs to the GatB/GatE family. GatB subfamily. As to quaternary structure, heterotrimer of A, B and C subunits.

It carries out the reaction L-glutamyl-tRNA(Gln) + L-glutamine + ATP + H2O = L-glutaminyl-tRNA(Gln) + L-glutamate + ADP + phosphate + H(+). The enzyme catalyses L-aspartyl-tRNA(Asn) + L-glutamine + ATP + H2O = L-asparaginyl-tRNA(Asn) + L-glutamate + ADP + phosphate + 2 H(+). Functionally, allows the formation of correctly charged Asn-tRNA(Asn) or Gln-tRNA(Gln) through the transamidation of misacylated Asp-tRNA(Asn) or Glu-tRNA(Gln) in organisms which lack either or both of asparaginyl-tRNA or glutaminyl-tRNA synthetases. The reaction takes place in the presence of glutamine and ATP through an activated phospho-Asp-tRNA(Asn) or phospho-Glu-tRNA(Gln). This Halobacterium salinarum (strain ATCC 700922 / JCM 11081 / NRC-1) (Halobacterium halobium) protein is Aspartyl/glutamyl-tRNA(Asn/Gln) amidotransferase subunit B.